The sequence spans 148 residues: FAD synthase (148 aa).

Residues 14–15, 19–22, and Asp97 each bind ATP; these read TF and HPGH.

It belongs to the archaeal FAD synthase family. As to quaternary structure, homodimer. A divalent metal cation serves as cofactor.

The catalysed reaction is FMN + ATP + H(+) = FAD + diphosphate. Its pathway is cofactor biosynthesis; FAD biosynthesis; FAD from FMN: step 1/1. In terms of biological role, catalyzes the transfer of the AMP portion of ATP to flavin mononucleotide (FMN) to produce flavin adenine dinucleotide (FAD) coenzyme. In Natrialba magadii (strain ATCC 43099 / DSM 3394 / CCM 3739 / CIP 104546 / IAM 13178 / JCM 8861 / NBRC 102185 / NCIMB 2190 / MS3) (Natronobacterium magadii), this protein is FAD synthase.